The sequence spans 337 residues: Transcription initiation factor IIB (337 aa).

The segment at 37 to 68 (YTVECPECGSRALVRDYERAELVCSECGLVID) adopts a TFIIB-type zinc-finger fold. Zn(2+) is bound by residues C41, C44, C60, and C63. 2 consecutive repeat copies span residues 154 to 237 (SELD…SREL) and 248 to 329 (DYIP…ELAE).

It belongs to the TFIIB family.

In terms of biological role, stabilizes TBP binding to an archaeal box-A promoter. Also responsible for recruiting RNA polymerase II to the pre-initiation complex (DNA-TBP-TFIIB). This is Transcription initiation factor IIB from Methanothrix thermoacetophila (strain DSM 6194 / JCM 14653 / NBRC 101360 / PT) (Methanosaeta thermophila).